We begin with the raw amino-acid sequence, 3125 residues long: MSTIVFGSFTCHLDAAIHQDNADRLAKAWTRPENRQVSNAHLLCRRAAESLINTYESATASAWKGLEEKLQPMFAKREFSKTVTKRKGLRCFKESSEKFIEKKLRKQYQEERERLQFLNGPDAIVNQISVDKCEASVRVPSPHIIEKPSFVTPSMKKKVVFKKVRMSEASLQLFMRRVAANAKANGQKVEIIGRKRVVGNYTTKSRLTYFRTHVRHLDGSKPRYDLVLDEATKKILQLFANTSGFHHVHKKGEVTPGMSGFVVNPMNLSDPMQVYDTDLFIVRGKHNSILVDSRCKVSKKQSNEIIHYSDPGKQFSDGFTNSFMQCKLRETDHQCTSDLDVKECGYVAALVCQAIIPCGKITCLQCAQKYSYMSQQEIRDRFSTVIEQHEKTVMDNYPQFSHVLAFLKRYRELMRVENQNYEAFKDITHMIGERKEAPFSHLNKINELIIKGGMMSAQDYIEASDHLRELARYQKNRTENIRSGSIKAFRNKISSKAHVNMQLMCDNQLDTNGNFVWGQREYHAKRFFRNYFDVIDVSEGYRRHIVRENPRGIRKLAIGNLVMSTNLAALRKQLLGEECIHFEVSKECTSKRGENFVYQCCCVTHEDGTPLESEIISPTKNHLVVGNSGDSKYVDLPTAKGGAMFIAKAGYCYINIFLAMLININEDEAKSFTKTVRDTLVPKLGTWPSMMDLATACHFLAVLYPETRNAELPRILVDHEAKIFHVVDSFGSLSTGMHVLKANTINQLISFASDTLDSNMKTYLVGGLEVDKCDEFKNVKLLIRSIYKPQIMEQVLKEEPYLLLMSVLSPGVLMALFNSGSLEKATQYWITRSHSLAAITSMLSALAAKVSLASTLNAQMSVIDEHAAVLYDSVFVGTQPYASYMMAVKTLERMKARTESDHTLNDLGFSVLRQATPHLVEKSYLQELEQAWKELSWSEKFSAILESQRWRKHIPKPFIPKDGADLGGRYDISVRSLLGNQYKRLRDVVRWKRDDVVCYTYQSMGKLFCKAIGISPSFLPSTLKMLDMLIVFSLLLSIGATCNSMVNEHKHLKQLAADREDKKRFKRLQVLYTRLSEKVGCTPTADEFLEYVGDENPDLLKHAEDLIGDGQVVVHQSKRDSQANLERVVAFVALVMMLFDSERSDGVYKILNKLKGIMGSVDRAVHHQSLDDIEDILDEKKLTVDFVLQSNEVAPTVPFDSTFEKWWMNQLETGNVIPHYRTEGHFLEFTRENAAHIANEVMHGSHQDILIRGAVGSGKSTGLPFHLSKKGHVLLIEPTRPLAENVCKQLRGQPFNVNPTLRMRGMSTFGSTPITVMTSGYALHFLANNPTYLDNYKCIIFDECHVHDASAMAFRCLLSEYSYPGKILKVSATPPGHEVEFKTQKEVKVIVEESLSFQQFVSNLGTGCNSDILKHGVNVLVYVASYNEVDTLSKLLTDRSFKVSKVDGRTMKVGNVEIPTSGTQAKPHFVVATNIIENGVTLDIDVVVDFGLKVVPVLDIDNRLVRYTKKSISYGERIQRLGRVGRNKPGAALRIGFTEKGLTQIPPIIATEAAFLCFTYGLPVMTNGVSTSLLAMCTVKQARTMQQFELSPFYTVALVRFDGTMHQEIFRLLKSYRLRDSEVILNKLAIPNSNVCGWMSVRDYKRQGCNLDLDENIRVPFYVKDIPETLHERIWQAVETHKSDAGFGRICSSSACKIAYTLQTDIHSIPRTIKIIDALLEQERTKQAHFRAMTSQSCSSSNFSLSSITSAIRSKYAKDHTEENIGVLQMAKSQLLEFKNLNIDPSYPELIRNFGALECVHHQTKEGVSKALQLKGHWNKRLITRDATLMLGVLGGGAWMIFSYLRDSFKEEVIHQGFNRRQRQKLKFRQARDNRMAREVYGDDSTMEAYFGSAYSKKGKSKGKTRGMGTKTRKFVNMYGYDPTDYNFVRFVDPLTGHTLDESPLMDINLVQEHFSQIRNDYIGDDKITMQHIMSNPGIVAYYIKDATQKALKVDLTPHNPLRVCDKTATIAGFPEREFELRQTGHPVFVEPNAIPKINEEGDEEVDHESKSLFRGLRDYNPIASSICQLNNSSGARQSEMFGLGFGGLIVTNQHLFKRNDGELTIRSHHGEFVVKDTKTLKLLPCKGRDIVIIRLPKDFPPFPRRLQFRTPTTEDRVCLIGSNFQTKSISSTMSETSATYPVDNSHFWKHWISTKDGHCGLPIVSTRDGSILGLHSLANSTNTQNFYAAFPDNFETTYLSNQDNDNWIKQWRYNPDEVCWGSLQLKRDIPQSPFTICKLLTDLDGEFVYTQSKTTHWLRDRLEGNLKAVGACPGQLVTKHVVKGKCTLFETYLLTHPEEHEFFRPLMGAYQKSALNKDAYVKDLMKYSKPIVVGAVDCDQFERAVDVVISMLISKGFEECNYVTDPDDIFSALNMKAAVGALYSGKKRDYFENVSDQDKESFVRASCKRLFMGKKGVWNGSLKAELRPKEKVEANKTRSFTAAPIDTLLGGKVCVDDFNNQFYSLNLHCPWSVGMTKFRGGWDKLLKALPEGWIYCDADGSQFDSSLSPYLINAVLNIRLAFMEEWDIGEQMLSNLYTEIVYTPIATPDGTIVKKFKGNNSGQPSTVVDNTLMVILAMTYSLLKLGHHPDTHDCICRYFVNGDDLVLAVHPAYESIYDELQEHFSQLGLNYTFTTKTENKEELWFMSHKGVLYDDMYIPKLEPERIVSILEWDRSNEPIHRLEAICASMVEAWGYKELLREIRKFYSWVLEQAPYNALSKDGKAPYIAETALKKLYTDTEASETEIERYLEAFYDNINDDGESNVVVHQADEREDEEEVDALQPPPVIQPAPRTTAPMLNPIFTPATTQPATKPVSQVSGPQLQTFGTYSHEDASPSNSNALVNTNRDRDVDAGSTGTFTVPRLKAMTSKLSLPKVKGKAIMNLNHLAHYSPAQVDLSNTRAPQSCFQTWYEGVKRDYDVTDDEMSIILNGLMVWCIENGTSPNINGMWVMMDGETQVEYPIKPLLDHAKPTFRQIMAHFSNVAEAYIEKRNYEKAYMPRYGIQRNLTDYSLARYAFDFYEMTSTTPVRAREAHIQMKAAALRNVQNRLFGLDGNVGTQEEDTERHTAGDVNRNMHNLLGMRGV.

Residues 165 to 308 (RMSEASLQLF…KKQSNEIIHY (144 aa)) enclose the Peptidase S30 domain. Catalysis depends on for P1 proteinase activity residues H216, D225, and S259. An Involved in interaction with stylet and aphid transmission motif is present at residues 360–363 (KITC). Residues 618–620 (PTK) carry the Involved in virions binding and aphid transmission motif. A Peptidase C6 domain is found at 644-766 (MFIAKAGYCY…DSNMKTYLVG (123 aa)). Residues C652 and H725 each act as for helper component proteinase activity in the active site. Residues 1240 to 1392 (EVMHGSHQDI…TQKEVKVIVE (153 aa)) enclose the Helicase ATP-binding domain. 1253–1260 (GAVGSGKS) provides a ligand contact to ATP. The DECH box signature appears at 1342 to 1345 (DECH). The 160-residue stretch at 1411–1570 (DILKHGVNVL…GLPVMTNGVS (160 aa)) folds into the Helicase C-terminal domain. Positions 1897 to 1904 (KKGKSKGK) match the Nuclear localization signal motif. Y1919 bears the O-(5'-phospho-RNA)-tyrosine mark. Residues 2050–2268 (SKSLFRGLRD…VCWGSLQLKR (219 aa)) enclose the Peptidase C4 domain. Catalysis depends on for nuclear inclusion protein A activity residues H2095, D2130, and C2200. The region spanning 2534 to 2658 (WIYCDADGSQ…AVHPAYESIY (125 aa)) is the RdRp catalytic domain. The interval 2869-2897 (TYSHEDASPSNSNALVNTNRDRDVDAGST) is disordered. 3 positions are modified to phosphoserine: S2876, S2896, and S2913. Positions 2876–2886 (SPSNSNALVNT) are enriched in polar residues. Phosphothreonine occurs at positions 3049 and 3108.

It belongs to the potyviridae genome polyprotein family. Interacts with host eIF4E protein (via cap-binding region); this interaction mediates the translation of the VPg-viral RNA conjugates. Part of a complex that comprises VPg, RNA, host EIF4E and EIF4G; this interaction mediates the translation of the VPg-viral RNA conjugates. VPg is uridylylated by the polymerase and is covalently attached to the 5'-end of the genomic RNA. This uridylylated form acts as a nucleotide-peptide primer for the polymerase. Post-translationally, potyviral RNA is expressed as two polyproteins which undergo post-translational proteolytic processing. Genome polyprotein is processed by NIa-pro, P1 and HC-pro proteinases resulting in the production of at least ten individual proteins. P3N-PIPO polyprotein is cleaved by P1 and HC-pro proteinases resulting in the production of three individual proteins. The P1 proteinase and the HC-pro cleave only their respective C-termini autocatalytically. 6K1 is essential for proper proteolytic separation of P3 from CI.

It is found in the host cytoplasmic vesicle. Its subcellular location is the host nucleus. It localises to the virion. It carries out the reaction RNA(n) + a ribonucleoside 5'-triphosphate = RNA(n+1) + diphosphate. The enzyme catalyses Hydrolyzes glutaminyl bonds, and activity is further restricted by preferences for the amino acids in P6 - P1' that vary with the species of potyvirus, e.g. Glu-Xaa-Xaa-Tyr-Xaa-Gln-|-(Ser or Gly) for the enzyme from tobacco etch virus. The natural substrate is the viral polyprotein, but other proteins and oligopeptides containing the appropriate consensus sequence are also cleaved.. It catalyses the reaction Hydrolyzes a Gly-|-Gly bond at its own C-terminus, commonly in the sequence -Tyr-Xaa-Val-Gly-|-Gly, in the processing of the potyviral polyprotein.. Functionally, required for aphid transmission and also has proteolytic activity. Only cleaves a Gly-Gly dipeptide at its own C-terminus. Interacts with virions and aphid stylets. Acts as a suppressor of RNA-mediated gene silencing, also known as post-transcriptional gene silencing (PTGS), a mechanism of plant viral defense that limits the accumulation of viral RNAs. May have RNA-binding activity. Has helicase activity. It may be involved in replication. Its function is as follows. Indispensable for virus replication. Reduces the abundance of host transcripts related to jasmonic acid biosynthesis therefore altering the host defenses. In order to increase its own stability, decreases host protein degradation pathways. In terms of biological role, indispensable for virus replication. Functionally, mediates the cap-independent, EIF4E-dependent translation of viral genomic RNAs. Binds to the cap-binding site of host EIF4E and thus interferes with the host EIF4E-dependent mRNA export and translation. VPg-RNA directly binds EIF4E and is a template for transcription. Also forms trimeric complexes with EIF4E-EIF4G, which are templates for translation. Has RNA-binding and proteolytic activities. Its function is as follows. An RNA-dependent RNA polymerase that plays an essential role in the virus replication. In terms of biological role, involved in aphid transmission, cell-to-cell and systemis movement, encapsidation of the viral RNA and in the regulation of viral RNA amplification. The sequence is that of Genome polyprotein from Plum pox potyvirus (isolate NAT) (PPV).